Here is a 119-residue protein sequence, read N- to C-terminus: Small ribosomal subunit protein uS10 (119 aa).

This sequence belongs to the universal ribosomal protein uS10 family. As to quaternary structure, component of the small ribosomal subunit. Mature ribosomes consist of a small (40S) and a large (60S) subunit. The 40S subunit contains about 32 different proteins and 1 molecule of RNA (18S). The 60S subunit contains 45 different proteins and 3 molecules of RNA (25S, 5.8S and 5S).

It localises to the cytoplasm. Functionally, component of the ribosome, a large ribonucleoprotein complex responsible for the synthesis of proteins in the cell. The small ribosomal subunit (SSU) binds messenger RNAs (mRNAs) and translates the encoded message by selecting cognate aminoacyl-transfer RNA (tRNA) molecules. The large subunit (LSU) contains the ribosomal catalytic site termed the peptidyl transferase center (PTC), which catalyzes the formation of peptide bonds, thereby polymerizing the amino acids delivered by tRNAs into a polypeptide chain. The nascent polypeptides leave the ribosome through a tunnel in the LSU and interact with protein factors that function in enzymatic processing, targeting, and the membrane insertion of nascent chains at the exit of the ribosomal tunnel. The polypeptide is Small ribosomal subunit protein uS10 (RPS20) (Candida albicans (strain SC5314 / ATCC MYA-2876) (Yeast)).